The chain runs to 549 residues: Manganese transporter SMF2 (549 aa).

Positions 1–23 (MTSQEYEPIQWSDESQTNNDSVN) are disordered. Residues 12-22 (SDESQTNNDSV) are compositionally biased toward polar residues. 8 helical membrane passes run 91-109 (LLFSVLVSNFMAAFWQYLC), 130-147 (FGLNITLYILAEMAIIAT), 161-185 (ILFHIPLALGVILTVVDVLIVLLAY), 196-214 (IFEAFVSLLVVLTVVCFTV), 312-332 (LLISLFTVALFVNCAILIVSG), 350-372 (IYNLLCSTLSKGAGTVFVLALLF), 432-452 (ASQVVLSLLLPFVSAPLLYFT), and 521-541 (VLAIIVWLIISGLNFYMLLGF).

The protein belongs to the NRAMP family.

The protein resides in the vacuole lumen. Its subcellular location is the vesicle. It is found in the cell membrane. The enzyme catalyses Mn(2+)(in) = Mn(2+)(out). High-affinity manganese transporter involved in manganese uptake from the extracellular environment. This is Manganese transporter SMF2 (SMF2) from Saccharomyces cerevisiae (strain ATCC 204508 / S288c) (Baker's yeast).